The following is a 363-amino-acid chain: Chorismate synthase (363 aa).

NADP(+)-binding residues include arginine 48 and arginine 54. FMN is bound by residues 125-127 (RSS), 237-238 (NA), glycine 277, 292-296 (KPTSS), and arginine 318.

Belongs to the chorismate synthase family. Homotetramer. FMNH2 is required as a cofactor.

The catalysed reaction is 5-O-(1-carboxyvinyl)-3-phosphoshikimate = chorismate + phosphate. Its pathway is metabolic intermediate biosynthesis; chorismate biosynthesis; chorismate from D-erythrose 4-phosphate and phosphoenolpyruvate: step 7/7. Its function is as follows. Catalyzes the anti-1,4-elimination of the C-3 phosphate and the C-6 proR hydrogen from 5-enolpyruvylshikimate-3-phosphate (EPSP) to yield chorismate, which is the branch point compound that serves as the starting substrate for the three terminal pathways of aromatic amino acid biosynthesis. This reaction introduces a second double bond into the aromatic ring system. In Stutzerimonas stutzeri (strain A1501) (Pseudomonas stutzeri), this protein is Chorismate synthase.